A 145-amino-acid chain; its full sequence is Early nodulin-like protein 21 (145 aa).

The first 17 residues, 1 to 17, serve as a signal peptide directing secretion; that stretch reads MFLWLVIVLTISASVSS. The Phytocyanin domain maps to 18-116; sequence YEHKLNWVVP…GQKMIVEVIS (99 aa). N-linked (GlcNAc...) asparagine glycans are attached at residues Asn-30 and Asn-71. A disulfide bridge links Cys-70 with Cys-104. Ser-116 carries GPI-anchor amidated serine lipidation. A propeptide spans 117–145 (removed in mature form); the sequence is RDHTTTSAAPPAAFAVLLCFFSLSLYFVA.

Belongs to the early nodulin-like (ENODL) family. In terms of tissue distribution, mostly expressed in leaves and flowers, and, to a lower extent, in roots and stems, but barely in seedlings and seeds.

Its subcellular location is the cell membrane. Its function is as follows. May act as a carbohydrate transporter. The polypeptide is Early nodulin-like protein 21 (Arabidopsis thaliana (Mouse-ear cress)).